Consider the following 479-residue polypeptide: Glycogen synthase (479 aa).

Residue Lys15 coordinates ADP-alpha-D-glucose.

It belongs to the glycosyltransferase 1 family. Bacterial/plant glycogen synthase subfamily.

It carries out the reaction [(1-&gt;4)-alpha-D-glucosyl](n) + ADP-alpha-D-glucose = [(1-&gt;4)-alpha-D-glucosyl](n+1) + ADP + H(+). The protein operates within glycan biosynthesis; glycogen biosynthesis. Its function is as follows. Synthesizes alpha-1,4-glucan chains using ADP-glucose. The sequence is that of Glycogen synthase from Pectobacterium atrosepticum (strain SCRI 1043 / ATCC BAA-672) (Erwinia carotovora subsp. atroseptica).